The primary structure comprises 525 residues: Ribosomal protein uS12 methylthiotransferase RimO (525 aa).

Residues 1-20 (MPKISTESVNTTIAPSQPAS) show a composition bias toward polar residues. The interval 1-44 (MPKISTESVNTTIAPSQPASTAPKDTATLFNPAKPTATPAQSSI) is disordered. One can recognise an MTTase N-terminal domain in the interval 82 to 192 (PKIGFVSLGC…VIRAVALHVP (111 aa)). Residues cysteine 91, cysteine 127, cysteine 156, cysteine 230, cysteine 234, and cysteine 237 each coordinate [4Fe-4S] cluster. The region spanning 216–453 (LTPSHYAYLK…MTLQQDISAQ (238 aa)) is the Radical SAM core domain. Residues 456-525 (QEKIGKTLMV…EYDLFASYQA (70 aa)) enclose the TRAM domain.

Belongs to the methylthiotransferase family. RimO subfamily. It depends on [4Fe-4S] cluster as a cofactor.

It localises to the cytoplasm. It catalyses the reaction L-aspartate(89)-[ribosomal protein uS12]-hydrogen + (sulfur carrier)-SH + AH2 + 2 S-adenosyl-L-methionine = 3-methylsulfanyl-L-aspartate(89)-[ribosomal protein uS12]-hydrogen + (sulfur carrier)-H + 5'-deoxyadenosine + L-methionine + A + S-adenosyl-L-homocysteine + 2 H(+). In terms of biological role, catalyzes the methylthiolation of an aspartic acid residue of ribosomal protein uS12. This chain is Ribosomal protein uS12 methylthiotransferase RimO, found in Psychrobacter arcticus (strain DSM 17307 / VKM B-2377 / 273-4).